Consider the following 430-residue polypeptide: Crotonyl-CoA carboxylase/reductase (430 aa).

This sequence belongs to the zinc-containing alcohol dehydrogenase family. Crotonyl-CoA carboxylase/reductase subfamily. In terms of assembly, homodimer. The cofactor is Despite some sequence similarity to zinc-containing alcohol dehydrogenases, this enzyme does not bind any metals..

It carries out the reaction (2S)-ethylmalonyl-CoA + NADP(+) = (2E)-butenoyl-CoA + CO2 + NADPH. It catalyses the reaction (S)-methylmalonyl-CoA + NADP(+) = acryloyl-CoA + CO2 + NADPH. The enzyme catalyses butanoyl-CoA + NADP(+) = (2E)-butenoyl-CoA + NADPH + H(+). Its function is as follows. Catalyzes the NADPH-dependent reductive carboxylation of crotonyl-CoA ((2E)-butenoyl-CoA) to (2S)-ethylmalonyl-CoA, in the presence of CO2. This is a key reaction in the ethylmalonyl-CoA pathway for acetyl-CoA assimilation required for R.sphaeroides growth on acetate as sole carbon source. Is also able to accept acryloyl-CoA as an alternative substrate, yielding (2S)-methylmalonyl-CoA. To a lesser extent, when CO2 is absent, the enzyme also catalyzes the reduction of crotonyl-CoA to butanoyl-CoA. The polypeptide is Crotonyl-CoA carboxylase/reductase (Cereibacter sphaeroides (strain ATCC 17023 / DSM 158 / JCM 6121 / CCUG 31486 / LMG 2827 / NBRC 12203 / NCIMB 8253 / ATH 2.4.1.) (Rhodobacter sphaeroides)).